The chain runs to 425 residues: SrfA-induced gene G protein (425 aa).

Residues asparagine 25, asparagine 28, and asparagine 36 are each glycosylated (N-linked (GlcNAc...) asparagine). Coiled-coil stretches lie at residues 41 to 91, 172 to 208, and 292 to 340; these read RDSE…RIRN, HEKQILEKTLRRHQQEQDNNNNNKKTIENQMERMKRT, and KFGQ…NYNI. Residues 91 to 113 form a helical membrane-spanning segment; it reads NVFKVLITILVGSIIYGTYTNQF. Positions 393–413 are disordered; the sequence is KKPHADSNGHPKPYPHHHLLN.

It is found in the membrane. This chain is SrfA-induced gene G protein (sigG), found in Dictyostelium discoideum (Social amoeba).